The sequence spans 142 residues: Putative pre-16S rRNA nuclease (142 aa).

It belongs to the YqgF nuclease family.

Its subcellular location is the cytoplasm. In terms of biological role, could be a nuclease involved in processing of the 5'-end of pre-16S rRNA. In Prosthecochloris aestuarii (strain DSM 271 / SK 413), this protein is Putative pre-16S rRNA nuclease.